Reading from the N-terminus, the 463-residue chain is SPARC-related modular calcium-binding protein 1 (463 aa).

Positions 1–25 are cleaved as a signal peptide; that stretch reads MLPARVRLLTPHLLLVLVQLSPAGG. The region spanning 36–88 is the Kazal-like domain; sequence SDRDPPCNPHCPRTQPKPICASDGRSYESMCEYQRAKCRDPALAVVHRGRCKD. Cystine bridges form between cysteine 42-cysteine 73, cysteine 46-cysteine 66, cysteine 55-cysteine 86, cysteine 94-cysteine 117, cysteine 128-cysteine 135, and cysteine 137-cysteine 157. One can recognise a Thyroglobulin type-1 1 domain in the interval 91–157; the sequence is QSKCRLERAQ…SSVQNKTPVC (67 aa). N-linked (GlcNAc...) asparagine glycosylation occurs at asparagine 224. In terms of domain architecture, Thyroglobulin type-1 2 spans 234–302; it reads VHSCDQERQS…TSTRYVMPSC (69 aa). 3 disulfide bridges follow: cysteine 237-cysteine 261, cysteine 272-cysteine 279, and cysteine 281-cysteine 302. 2 EF-hand domains span residues 369–404 and 406–441; these read LEERVAHWYFSQLDSNSSDDINKREMKPFKRYVKKK and KPKKCARRFTDYCDLNKDKVISLPELKGCLGVSKEG. Ca(2+)-binding residues include aspartate 382, asparagine 384, serine 386, aspartate 388, glutamate 393, aspartate 419, asparagine 421, aspartate 423, and glutamate 430. Asparagine 384 carries N-linked (GlcNAc...) asparagine glycosylation.

In terms of processing, glycosylated. In terms of tissue distribution, widely expressed in many tissues with a strongest signal in ovary.

The protein resides in the secreted. It is found in the extracellular space. It localises to the extracellular matrix. The protein localises to the basement membrane. Probable regulator of osteoblast differentiation. Plays essential roles in both eye and limb development. The sequence is that of SPARC-related modular calcium-binding protein 1 (Smoc1) from Mus musculus (Mouse).